Here is a 627-residue protein sequence, read N- to C-terminus: Neuronal acetylcholine receptor subunit alpha-4 (627 aa).

Positions 1 to 31 (MELGGPGAPPPPLLPPLLLLLGAGFLPASSP) are cleaved as a signal peptide. Residues 32-244 (VETRAHAEER…ITYAFVIRRL (213 aa)) lie on the Extracellular side of the membrane. An N-linked (GlcNAc...) asparagine glycan is attached at Asn59. Positions 78 and 80 each coordinate Ca(2+). N-linked (GlcNAc...) asparagine glycosylation is found at Asn109 and Asn176. Intrachain disulfides connect Cys163–Cys177 and Cys227–Cys228. The chain crosses the membrane as a helical span at residues 245–269 (PLFYTINLIVPCLLISCLTVLVFYL). Residue Cys273 is the site of S-palmitoyl cysteine attachment. A run of 2 helical transmembrane segments spans residues 277–295 (VTLCISVLLSLTVFLLLIT) and 311–332 (YLLFTMVFVTLSIVITVFVLNV). Residues 333-600 (HHRSPRTHTM…WKYVAMVIDR (268 aa)) are Cytoplasmic-facing. Positions 384–399 (PGFWPEPEGEPGVVSG) are enriched in low complexity. Positions 384–463 (PGFWPEPEGE…PPPSTRAPGL (80 aa)) are disordered. Residue Ser427 is modified to Phosphoserine. Over residues 444–458 (SPCPLPDSCRPPPST) the composition is skewed to pro residues. Position 541 is a phosphoserine (Ser541). Residues 601-619 (IFLWVFVIVCLLGTAGLFL) traverse the membrane as a helical segment.

The protein belongs to the ligand-gated ion channel (TC 1.A.9) family. Acetylcholine receptor (TC 1.A.9.1) subfamily. Alpha-4/CHRNA4 sub-subfamily. Neuronal AChR is composed of two different types of subunits: alpha and beta. CHRNA4 forms heteropentameric neuronal acetylcholine receptors with CHRNB2 and CHRNB4, as well as CHRNA5 and CHRNB3 as accesory subunits. Found in two major stoichiometric forms, LS (low agonist sensitivity): (CHRNA4)3:(CHRNB2)2 and HS (high agonist sensitivity): (CHRNA4)2:(CHRNB2)3, the two stoichiometric forms differ in their unitary conductance, calcium permeability, ACh sensitivity and potentiation by divalent cation. Cells produce predominantly an (CHRNA4)3:(CHRNB2)2 nAChR. The (CHRNA4)2:(CHRNB2)3 expression is selectively up-regulated by nicotine and has lower single channel conductance and calcium permeability. In the striatum, also forms CHRNA4:CHRNA6:CHRNB2 complexes. Also found in the stoichiometric form: (CHRNA4:CHRNB2)2:CHRNB3. Interacts with RIC3; which is required for proper folding and assembly. Interacts with LYPD6.

The protein resides in the synaptic cell membrane. It is found in the cell membrane. The catalysed reaction is Ca(2+)(in) = Ca(2+)(out). It catalyses the reaction K(+)(in) = K(+)(out). It carries out the reaction Na(+)(in) = Na(+)(out). With respect to regulation, activated by a myriad of ligands such as acetylcholine, cytisine, nicotine, choline and epibatidine. Channel potentiation by calcium is stoichiometry-selective, CHRNA4:CHRNB2 nACh receptor is achieved by calcium association with topographically distinct sites framed by anionic residues within the CHRNA4 subunit and between the CHRNA4 and CHRNB2 subunits. nAChR activity is inhibited by the antagonist alpha-conotoxins BuIA, PnIA, GID and MII, small disulfide-constrained peptides from cone snails. Functionally, component of neuronal acetylcholine receptors (nAChRs) that function as pentameric, ligand-gated cation channels with high calcium permeability among other activities. nAChRs are excitatory neurotrasnmitter receptors formed by a collection of nAChR subunits known to mediate synaptic transmission in the nervous system and the neuromuscular junction. Each nAchR subunit confers differential attributes to channel properties, including activation, deactivation and desensitization kinetics, pH sensitivity, cation permeability, and binding to allosteric modulators. CHRNA4 forms heteropentameric neuronal acetylcholine receptors with CHRNB2 and CHRNB4, as well as CHRNA5 and CHRNB3 as accesory subunits. Is the most abundant nAChR subtype expressed in the central nervous system. Found in two major stoichiometric forms,(CHRNA4)3:(CHRNB2)2 and (CHRNA4)2:(CHRNB2)3, the two stoichiometric forms differ in their unitary conductance, calcium permeability, ACh sensitivity and potentiation by divalent cation. Involved in the modulation of calcium-dependent signaling pathways, influences the release of neurotransmitters, including dopamine, glutamate and GABA. The chain is Neuronal acetylcholine receptor subunit alpha-4 (CHRNA4) from Mustela putorius furo (European domestic ferret).